A 98-amino-acid polypeptide reads, in one-letter code: Protein Asterix (98 aa).

The next 2 membrane-spanning stretches (helical) occupy residues 32-52 (LFSI…CLWV) and 78-98 (VSLS…NLFV).

The protein belongs to the Asterix family.

It is found in the membrane. This Dictyostelium discoideum (Social amoeba) protein is Protein Asterix.